The primary structure comprises 109 residues: N-alpha-acetyltransferase 38, NatC auxiliary subunit (109 aa).

The 79-residue stretch at 23–101 (LARCKLENLL…VVSIEVETES (79 aa)) folds into the Sm domain.

This sequence belongs to the snRNP Sm proteins family. Component of the N-terminal acetyltransferase C (NatC) complex.

It localises to the cytoplasm. The protein localises to the nucleus. In terms of biological role, auxillary component of the N-terminal acetyltransferase C (NatC) complex which catalyzes acetylation of N-terminal methionine residues. N-terminal acetylation protects proteins from ubiquitination and degradation by the N-end rule pathway. This Danio rerio (Zebrafish) protein is N-alpha-acetyltransferase 38, NatC auxiliary subunit (naa38).